A 353-amino-acid chain; its full sequence is Trans-enoyl reductase RAP2 (353 aa).

46–49 (CDHK) serves as a coordination point for NADP(+). 131–138 (TGLSTIGM) is a binding site for substrate. NADP(+) contacts are provided by residues 189 to 192 (SPRN), Y207, and 254 to 255 (LE). 274–278 (GMALL) lines the substrate pocket. Residue 343–344 (VS) coordinates NADP(+).

It belongs to the zinc-containing alcohol dehydrogenase family. Monomer.

It functions in the pathway secondary metabolite biosynthesis. Its function is as follows. Trans-enoyl reductase; part of the gene cluster that mediates the biosynthesis of a tyrosine-derived cytochalasan acting as a fungal signal recognized by resistant rice plants and leads to avirulence in Pi33 resistant rice cultivars. The first step in the pathway is catalyzed by the hybrid PKS-NRPS ACE1, assisted by the enoyl reductase RAP1, that are responsible for fusion of the tyrosine precursor and the polyketide backbone. The polyketide synthase module (PKS) of ACE1 is responsible for the synthesis of the polyketide backbone and the downstream nonribosomal peptide synthetase (NRPS) amidates the carboxyl end of the polyketide with the tyrosine precursor. Because ACE1 lacks a designated enoylreductase (ER) domain, the required activity is provided the enoyl reductase RAP1. Reduction by the hydrolyase ORFZ, followed by dehydration and intra-molecular Diels-Alder cyclization by the Diels-Alderase ORF3 then yield the required isoindolone-fused macrocycle. A number of oxidative steps catalyzed by the tailoring enzymes identified within the cluster, including cytochrome P450 monooxygenases CYP1 to CYP4, the FAD-linked oxidoreductase OXR2 and the short-chain dehydrogenase/reductase OXR1, are further required to afford the final cytochalasans that confer avirulence and which have still to be identified. The monooxygenase CYP1 has been shown to be a site-selective C-18 hydroxylase whereas the function of CYP3 is the site-selective epoxidation of the C-6/C-7 olefin that is present in some intermediate compounds. Finally, SYN2 and RAP2 are not required for avirulence in Pi33 resistant rice cultivars. The chain is Trans-enoyl reductase RAP2 from Pyricularia oryzae (strain 70-15 / ATCC MYA-4617 / FGSC 8958) (Rice blast fungus).